A 220-amino-acid polypeptide reads, in one-letter code: MGMDQQPNPPDVDAFLDSTLVGDDPALAAALAASDAAELPRIAVSAQQGKFLCLLAGAIQARRVLEIGTLGGFSTIWLARGAGPQGRVVTLEYQPKHAEVARVNLQRAGVADRVEVVVGPALDTLPTLAGGPFDLVFIDADKENNVAYIQWAIRLARRGAVIVVDNVIRGGGILAESDDADAVAARRTLQMMGEHPGLDATAIQTVGRKGWDGFALALVR.

Residues valine 44, glutamate 66, glycine 68–threonine 69, serine 74, glutamate 92, and alanine 121 contribute to the S-adenosyl-L-methionine site. Position 139 (aspartate 139) interacts with a divalent metal cation. Aspartate 141 contacts S-adenosyl-L-methionine. A divalent metal cation is bound by residues aspartate 165 and asparagine 166.

This sequence belongs to the class I-like SAM-binding methyltransferase superfamily. Cation-dependent O-methyltransferase family. Homodimer. The cofactor is a divalent metal cation.

It catalyses the reaction a catechol + S-adenosyl-L-methionine = a guaiacol + S-adenosyl-L-homocysteine + H(+). Its activity is regulated as follows. Inhibited by EDTA. Its function is as follows. Catechol O-methyltransferase that can use various catechol-like compounds such as gallic acid (GA), 3,4-dihydroxy-5-methoxy-benzoic acid (5OMeBA), protocatechuic acid (PCA), 3,4-dihydroxy-benzaldehyde (DHA), dopamine, caffeic acid (CA), luteolin, quercetin, and 5-hydroxyuridine. The polypeptide is Catechol O-methyltransferase (Mycobacterium tuberculosis (strain ATCC 25618 / H37Rv)).